Consider the following 302-residue polypeptide: Phosphoribosylaminoimidazole-succinocarboxamide synthase (302 aa).

It belongs to the SAICAR synthetase family.

It carries out the reaction 5-amino-1-(5-phospho-D-ribosyl)imidazole-4-carboxylate + L-aspartate + ATP = (2S)-2-[5-amino-1-(5-phospho-beta-D-ribosyl)imidazole-4-carboxamido]succinate + ADP + phosphate + 2 H(+). Its pathway is purine metabolism; IMP biosynthesis via de novo pathway; 5-amino-1-(5-phospho-D-ribosyl)imidazole-4-carboxamide from 5-amino-1-(5-phospho-D-ribosyl)imidazole-4-carboxylate: step 1/2. The polypeptide is Phosphoribosylaminoimidazole-succinocarboxamide synthase (Ralstonia nicotianae (strain ATCC BAA-1114 / GMI1000) (Ralstonia solanacearum)).